The sequence spans 563 residues: Autotransporter BimA (563 aa).

Positions 1-20 (MKYRRLSLAHARQDSGQAAS) are disordered. Positions 1–48 (MKYRRLSLAHARQDSGQAASNARSRRFARLLCSSIAPLALGFSADAFA) are cleaved as a signal peptide. A surface exposed passenger domain region spans residues 61–472 (APNDAHGNLL…NLAISNSNAY (412 aa)). Positions 65–82 (AHGNLLDEIRRGVPLRHV) constitute a WH2 domain. The central and acidic domains stretch occupies residues 96–130 (TLADAMRRVIDSRRTAFDSPPATPASPSPSWSDDE). Residues 109–350 (RTAFDSPPAT…PARPGGGQFT (242 aa)) are disordered. Composition is skewed to low complexity over residues 138 to 150 (ATRP…SAAR), 162 to 197 (PASA…STPR), and 211 to 227 (SPAA…AHSR). 2 stretches are compositionally biased toward polar residues: residues 228–238 (GSTQPPSNLST) and 269–281 (SRGS…NLST). The interval 473–509 (TNQRIGDLQQSITETARDAYSGVAAATALTMIPDVDR) is outer membrane translocation of the passenger domain. 4 consecutive transmembrane segments (beta stranded) span residues 510-519 (DKMLSIGVGG), 525-536 (HRAVALGGTARI), 543-549 (RAGVAMS), and 553-563 (NTVGVGMSWQW). Positions 510–563 (DKMLSIGVGGAVYKGHRAVALGGTARIGENLKVRAGVAMSAGGNTVGVGMSWQW) are translocator domain.

It belongs to the autotransporter-2 (AT-2) (TC 1.B.40) family. Homotrimer. Interacts with host G-actin; the interaction is direct. Interacts (via central and acidic domains) with host ACTR2/ARP2 and ACTR3/ARP3.

It is found in the cell outer membrane. The protein localises to the cell surface. In terms of biological role, during host cell infection, required for actin-based intracellular motility. Mediates actin tail formation at one pole of the bacteria surface by recruiting host Arp2/3 (ACTR3/ARP3-ACTR2/ARP2) which leads to actin polymerization which provides the propulsive force for intracellular movement and intercellular dissemination of the bacterium. This is Autotransporter BimA from Burkholderia thailandensis (strain ATCC 700388 / DSM 13276 / CCUG 48851 / CIP 106301 / E264).